A 397-amino-acid chain; its full sequence is Tryptophan synthase beta chain (397 aa).

At Lys87 the chain carries N6-(pyridoxal phosphate)lysine.

This sequence belongs to the TrpB family. In terms of assembly, tetramer of two alpha and two beta chains. Pyridoxal 5'-phosphate is required as a cofactor.

It catalyses the reaction (1S,2R)-1-C-(indol-3-yl)glycerol 3-phosphate + L-serine = D-glyceraldehyde 3-phosphate + L-tryptophan + H2O. Its pathway is amino-acid biosynthesis; L-tryptophan biosynthesis; L-tryptophan from chorismate: step 5/5. Functionally, the beta subunit is responsible for the synthesis of L-tryptophan from indole and L-serine. This is Tryptophan synthase beta chain from Enterobacter sp. (strain 638).